Consider the following 84-residue polypeptide: Small ribosomal subunit protein bS20 (84 aa).

Over residues 62 to 72 (KNKARRLKSRA) the composition is skewed to basic residues. The interval 62–84 (KNKARRLKSRAARWSNSATAASR) is disordered. Over residues 75–84 (WSNSATAASR) the composition is skewed to polar residues.

This sequence belongs to the bacterial ribosomal protein bS20 family.

In terms of biological role, binds directly to 16S ribosomal RNA. The polypeptide is Small ribosomal subunit protein bS20 (Mycoplasmoides gallisepticum (strain R(low / passage 15 / clone 2)) (Mycoplasma gallisepticum)).